The primary structure comprises 291 residues: tRNA U34 carboxymethyltransferase (291 aa).

Carboxy-S-adenosyl-L-methionine is bound by residues K61, W75, K80, G100, 122–124 (DPS), 149–150 (VE), Y169, and R284.

This sequence belongs to the class I-like SAM-binding methyltransferase superfamily. CmoB family. Homotetramer.

The catalysed reaction is carboxy-S-adenosyl-L-methionine + 5-hydroxyuridine(34) in tRNA = 5-carboxymethoxyuridine(34) in tRNA + S-adenosyl-L-homocysteine + H(+). Functionally, catalyzes carboxymethyl transfer from carboxy-S-adenosyl-L-methionine (Cx-SAM) to 5-hydroxyuridine (ho5U) to form 5-carboxymethoxyuridine (cmo5U) at position 34 in tRNAs. This chain is tRNA U34 carboxymethyltransferase, found in Campylobacter jejuni subsp. jejuni serotype O:2 (strain ATCC 700819 / NCTC 11168).